The sequence spans 196 residues: Imidazole glycerol phosphate synthase subunit HisH (196 aa).

A Glutamine amidotransferase type-1 domain is found at 2–196 (KVVILDTGCA…AQLLKNFLEM (195 aa)). Catalysis depends on C77, which acts as the Nucleophile. Residues H178 and E180 contribute to the active site.

Heterodimer of HisH and HisF.

Its subcellular location is the cytoplasm. It catalyses the reaction 5-[(5-phospho-1-deoxy-D-ribulos-1-ylimino)methylamino]-1-(5-phospho-beta-D-ribosyl)imidazole-4-carboxamide + L-glutamine = D-erythro-1-(imidazol-4-yl)glycerol 3-phosphate + 5-amino-1-(5-phospho-beta-D-ribosyl)imidazole-4-carboxamide + L-glutamate + H(+). The enzyme catalyses L-glutamine + H2O = L-glutamate + NH4(+). The protein operates within amino-acid biosynthesis; L-histidine biosynthesis; L-histidine from 5-phospho-alpha-D-ribose 1-diphosphate: step 5/9. In terms of biological role, IGPS catalyzes the conversion of PRFAR and glutamine to IGP, AICAR and glutamate. The HisH subunit catalyzes the hydrolysis of glutamine to glutamate and ammonia as part of the synthesis of IGP and AICAR. The resulting ammonia molecule is channeled to the active site of HisF. In Pectobacterium atrosepticum (strain SCRI 1043 / ATCC BAA-672) (Erwinia carotovora subsp. atroseptica), this protein is Imidazole glycerol phosphate synthase subunit HisH.